Here is a 497-residue protein sequence, read N- to C-terminus: Bifunctional protein GlmU (497 aa).

The interval 1-252 is pyrophosphorylase; that stretch reads MSQPSARPSA…VWEVEGANDR (252 aa). UDP-N-acetyl-alpha-D-glucosamine contacts are provided by residues 14 to 17, Lys28, Gln86, 91 to 92, 115 to 117, Gly154, Glu169, Asn192, and Asn250; these read LAAG, GT, and YGD. A Mg(2+)-binding site is contributed by Asp117. Asn250 serves as a coordination point for Mg(2+). Residues 253 to 273 are linker; that stretch reads RQLSDLGRRLNERVLRHWMKE. The N-acetyltransferase stretch occupies residues 274-497; it reads GVTVVDPSST…AGAEGSGAQG (224 aa). 2 residues coordinate UDP-N-acetyl-alpha-D-glucosamine: Arg355 and Lys373. The active-site Proton acceptor is the His385. UDP-N-acetyl-alpha-D-glucosamine contacts are provided by Tyr388 and Asn399. Residues 408–409, Ser427, and Ala445 each bind acetyl-CoA; that span reads NY. The disordered stretch occupies residues 473-497; the sequence is PAKRPGTSSAEAARAAGAEGSGAQG. Residues 480-490 show a composition bias toward low complexity; it reads SSAEAARAAGA.

In the N-terminal section; belongs to the N-acetylglucosamine-1-phosphate uridyltransferase family. It in the C-terminal section; belongs to the transferase hexapeptide repeat family. Homotrimer. Requires Mg(2+) as cofactor.

The protein resides in the cytoplasm. It catalyses the reaction alpha-D-glucosamine 1-phosphate + acetyl-CoA = N-acetyl-alpha-D-glucosamine 1-phosphate + CoA + H(+). It carries out the reaction N-acetyl-alpha-D-glucosamine 1-phosphate + UTP + H(+) = UDP-N-acetyl-alpha-D-glucosamine + diphosphate. It functions in the pathway nucleotide-sugar biosynthesis; UDP-N-acetyl-alpha-D-glucosamine biosynthesis; N-acetyl-alpha-D-glucosamine 1-phosphate from alpha-D-glucosamine 6-phosphate (route II): step 2/2. It participates in nucleotide-sugar biosynthesis; UDP-N-acetyl-alpha-D-glucosamine biosynthesis; UDP-N-acetyl-alpha-D-glucosamine from N-acetyl-alpha-D-glucosamine 1-phosphate: step 1/1. The protein operates within bacterial outer membrane biogenesis; LPS lipid A biosynthesis. Its function is as follows. Catalyzes the last two sequential reactions in the de novo biosynthetic pathway for UDP-N-acetylglucosamine (UDP-GlcNAc). The C-terminal domain catalyzes the transfer of acetyl group from acetyl coenzyme A to glucosamine-1-phosphate (GlcN-1-P) to produce N-acetylglucosamine-1-phosphate (GlcNAc-1-P), which is converted into UDP-GlcNAc by the transfer of uridine 5-monophosphate (from uridine 5-triphosphate), a reaction catalyzed by the N-terminal domain. This chain is Bifunctional protein GlmU, found in Micrococcus luteus (strain ATCC 4698 / DSM 20030 / JCM 1464 / CCM 169 / CCUG 5858 / IAM 1056 / NBRC 3333 / NCIMB 9278 / NCTC 2665 / VKM Ac-2230) (Micrococcus lysodeikticus).